A 568-amino-acid chain; its full sequence is General O-oligosaccharyltransferase (568 aa).

12 helical membrane-spanning segments follow: residues 17-37 (VAVMRFLLLLLTAVLISLAWL), 46-66 (LTFASEMLSFAAFLSLLALFL), 78-98 (LALPVVFIPMIQWGFGLVVDF), 101-121 (ALLSSAYLLGFWLTMLLGYNL), 132-152 (FTLSSYLLFAVALLTSLIACI), 176-196 (FAQPNNMSTFLILGLLGCLYL), 214-234 (IVFAITLSQSRTAWVFGLFFI), 251-271 (YAVLLWAIGFFAVGLLFPRFT), 349-369 (LLVWNGWLLGGLITICILIWI), 376-396 (AKTTESIIACLMVSAVWIHTL), 397-417 (LEYPLQYAYFLLPVGFLMGLI), and 429-449 (VPVSVIRSIWVIGIMLLALIW).

This sequence belongs to the PglL O-oligosaccharyltransferase family.

The protein resides in the cell membrane. Its function is as follows. Catalyzes the O-glycosylation of multiple protein targets. Is responsible for general protein glycosylation within A.baylyi ADP1. Does not act as an O-antigen ligase. In Acinetobacter baylyi (strain ATCC 33305 / BD413 / ADP1), this protein is General O-oligosaccharyltransferase.